The chain runs to 548 residues: MAAKDVKFGIDARNKMLRGVNVLADAVKVTLGPKGRNVVLDKSFGAPVITKDGVSVAREIELEDKFENMGAQMVKEVASKANDAAGDGTTTATVLAQAIIAEGLKAVAAGMNPMDLKRGIDKAVVGAVEELKKLSVPCSDTKAIAQVGTISANSDETVGTLIAQAMEKVGKEGVITVEEGTGLEDELDVVEGMQFDRGYLSPYFINKPETGTAELENPFILLVDKKVSNIRELLPVLEGVAKANKPLLIIAEDVEGEALATLVVNNMRGIVKVAAVKAPGFGDRRKAMLQDIAILTNGTVISEEIGMELEKATLEDLGQAKRVVINKDTTTIIDGLGEQEAISGRVAQIRQQIEDATSDYDREKLQERVAKLAGGVAVIKVGAATEVEMKEKRARVDDALHATRAAVEEGVVAGGGTALVRVANALREMTGDNEEQTVGIRVALRAMEAPMRQIVANAGEEPSVVVNDVKAGQGNYGYNAATEAYGDMIEMGILDPTKVTRSALQFAASIAGLMITTEAMVTDLPKDEKMDLGAAGGMGGMGGMGGMM.

ATP contacts are provided by residues T30–P33, K51, D87–T91, G415, N479–A481, and D495.

It belongs to the chaperonin (HSP60) family. Forms a cylinder of 14 subunits composed of two heptameric rings stacked back-to-back. Interacts with the co-chaperonin GroES.

The protein resides in the cytoplasm. The catalysed reaction is ATP + H2O + a folded polypeptide = ADP + phosphate + an unfolded polypeptide.. Together with its co-chaperonin GroES, plays an essential role in assisting protein folding. The GroEL-GroES system forms a nano-cage that allows encapsulation of the non-native substrate proteins and provides a physical environment optimized to promote and accelerate protein folding. This Proteus mirabilis (strain HI4320) protein is Chaperonin GroEL.